A 331-amino-acid chain; its full sequence is Protein-methionine-sulfoxide reductase catalytic subunit MsrP (331 aa).

Positions 1-57 (MLIKKTLRAALAGDDIPRSEITPRAVFEHRRRILQAAGAAAAGGLVGAHGLALAAYA) form a signal peptide, tat-type signal. Mo-molybdopterin is bound by residues Asn-90, 93–94 (YE), Cys-148, Thr-183, Asn-231, Arg-236, and 247–249 (SAK).

This sequence belongs to the MsrP family. Heterodimer of a catalytic subunit (MsrP) and a heme-binding subunit (MsrQ). Requires Mo-molybdopterin as cofactor. In terms of processing, predicted to be exported by the Tat system. The position of the signal peptide cleavage has not been experimentally proven.

It localises to the periplasm. The enzyme catalyses L-methionyl-[protein] + a quinone + H2O = L-methionyl-(S)-S-oxide-[protein] + a quinol. It catalyses the reaction L-methionyl-[protein] + a quinone + H2O = L-methionyl-(R)-S-oxide-[protein] + a quinol. Part of the MsrPQ system that repairs oxidized periplasmic proteins containing methionine sulfoxide residues (Met-O), using respiratory chain electrons. Thus protects these proteins from oxidative-stress damage caused by reactive species of oxygen and chlorine generated by the host defense mechanisms. MsrPQ is essential for the maintenance of envelope integrity under bleach stress, rescuing a wide series of structurally unrelated periplasmic proteins from methionine oxidation. The catalytic subunit MsrP is non-stereospecific, being able to reduce both (R-) and (S-) diastereoisomers of methionine sulfoxide. This Burkholderia mallei (strain ATCC 23344) protein is Protein-methionine-sulfoxide reductase catalytic subunit MsrP.